The following is a 584-amino-acid chain: Phenylalanine--tRNA ligase beta subunit (584 aa).

The region spanning 290-369 is the B5 domain; sequence FSVRTKTVTH…RALGFNSLEP (80 aa). Mg(2+) is bound by residues Asp347, Asp353, Asp356, and Asp357.

Belongs to the phenylalanyl-tRNA synthetase beta subunit family. Type 2 subfamily. In terms of assembly, tetramer of two alpha and two beta subunits. It depends on Mg(2+) as a cofactor.

The protein localises to the cytoplasm. It catalyses the reaction tRNA(Phe) + L-phenylalanine + ATP = L-phenylalanyl-tRNA(Phe) + AMP + diphosphate + H(+). This Haloarcula marismortui (strain ATCC 43049 / DSM 3752 / JCM 8966 / VKM B-1809) (Halobacterium marismortui) protein is Phenylalanine--tRNA ligase beta subunit.